The primary structure comprises 238 residues: Lactate utilization protein A (238 aa).

This sequence belongs to the LutA/YkgE family.

Is involved in L-lactate degradation and allows cells to grow with lactate as the sole carbon source. The protein is Lactate utilization protein A of Bacillus licheniformis (strain ATCC 14580 / DSM 13 / JCM 2505 / CCUG 7422 / NBRC 12200 / NCIMB 9375 / NCTC 10341 / NRRL NRS-1264 / Gibson 46).